The primary structure comprises 519 residues: MSLASTLPRASFETLLQHTNFMDGIKFVFFAFVVYSCFTIAVGWVVYEWKRKAHGCGKIPRYPHRDPFFGFDIVFGMAKSLRNDYFLVWLNKVHENLPKTFLVNFVGTRFIYTIEPENMKSMSAINWQDFAVGPMRRNNKATAPFADKGVNTVDGHEWEFSRFLIKPFFKRETFTDTSRLTLHVDRVLEQLPADGETVNIQPLIQRWFLDVTTASLFGESIESLVYPERAPICWAMVDVLRGLRLRLQWYKYLWLFRHQAWLDAVEVVHRYLNAHIDRTYKELDEYKRQGKNPEAADRNDLLWYMASNLQDKEALRSQICLIFVPNNDTTSIFISHILWNLARHPGIYEKCRQEVLALGDAELSFSVLRNMKYLNAVLNETHRLFPNGVTQVRKCIRDTTLPVGGGPDGKQPIFVRKGDVVQVNKNVIHRDHDIWGPDAEDFRPERWENLRPYWNFVPFGGGPRRCPAQMLVTAEASYFLARLMRVYKRIEARDPNPYVGVMRVGPSNKTGVHIALFKE.

The chain crosses the membrane as a helical span at residues 27 to 47; that stretch reads FVFFAFVVYSCFTIAVGWVVY. 2 N-linked (GlcNAc...) asparagine glycosylation sites follow: Asn-327 and Asn-379. Cys-466 is a binding site for heme. Residue Asn-508 is glycosylated (N-linked (GlcNAc...) asparagine).

Belongs to the cytochrome P450 family. Requires heme as cofactor.

Its subcellular location is the membrane. Its pathway is secondary metabolite biosynthesis. In terms of biological role, cytochrome P450 monooxygenase; part of the gene cluster that mediates the biosynthesis of aspyridones. The polyketide-amino acid backbone preaspyridone A is first assembled by the PKS-NRPS hybrid apdA. The assembly of preaspyridone A is initiated by loading of malonyl-CoA onto apdA, followed by decarboxylation to yield the acetyl starter unit. The growing polyketide chain then elongates into a tetraketide. The adpA PKS module catalyzes three Claisen condensations, as well as beta-keto processing and methylation. Alpha-methylation step during polyketide synthesis is a prerequisite and a key checkpoint for chain transfer between PKS and NRPS modules. The downstream NRPS module contains the condensation (C), adenylation (A), and thiolation (T) domains and catalyzes the incorporation of tyrosine via the formation of the L-tyrosinyl-thioester and the amide linkage between L-tyrosinyl-thioester and the tetraketide. The bimodular assembly line is terminated with a reductase (R) domain that facilitates formation and release of the tetramic acid product. Because apdA lacks a designated enoylreductase (ER) domain, the required activity is provided the enoyl reductase apdC. ApdC appears to operate with different stereoselectivity in different PKS cycle. Combined with apdC, apdA is proposed to synthesize preaspyridone A via about 20 enzymatic steps. A number of oxidative steps performed successively by the cytochrome P450 monooxygenases apdE and apdB are required for the conversion of preaspyridone A to aspyridone A. The cytochrome P450 monooxygenase apdE is responsible for the oxidative dephenylation of preaspyridone A. Finally, the predicted FAD-dependent monooxygenase apdD and the acyl-CoA dehydrogenase apdG may be involved in the transformation of aspyridone A into aspyridone B. This is Cytochrome P450 monooxygenase apdE from Emericella nidulans (strain FGSC A4 / ATCC 38163 / CBS 112.46 / NRRL 194 / M139) (Aspergillus nidulans).